The following is a 282-amino-acid chain: Tyrosine recombinase XerA (282 aa).

Residues 2-79 (EAINEVIEEY…ALRSYFRFEG (78 aa)) enclose the Core-binding (CB) domain. The Tyr recombinase domain occupies 95–271 (SLPKSLTREE…TVEHLRKAQE (177 aa)). Catalysis depends on residues arginine 132, lysine 157, histidine 223, arginine 226, and histidine 249. Tyrosine 258 (O-(3'-phospho-DNA)-tyrosine intermediate) is an active-site residue.

It belongs to the 'phage' integrase family. XerA subfamily.

It localises to the cytoplasm. Functionally, site-specific tyrosine recombinase, which acts by catalyzing the cutting and rejoining of the recombining DNA molecules. This is Tyrosine recombinase XerA from Thermococcus onnurineus (strain NA1).